The sequence spans 343 residues: tRNA N6-adenosine threonylcarbamoyltransferase (343 aa).

Fe cation contacts are provided by His-115 and His-119. Substrate contacts are provided by residues 137-141, Asp-170, Gly-183, Asp-187, and Asn-276; that span reads LVSGG. Residue Asp-306 participates in Fe cation binding.

Belongs to the KAE1 / TsaD family. The cofactor is Fe(2+).

The protein resides in the cytoplasm. It carries out the reaction L-threonylcarbamoyladenylate + adenosine(37) in tRNA = N(6)-L-threonylcarbamoyladenosine(37) in tRNA + AMP + H(+). Functionally, required for the formation of a threonylcarbamoyl group on adenosine at position 37 (t(6)A37) in tRNAs that read codons beginning with adenine. Is involved in the transfer of the threonylcarbamoyl moiety of threonylcarbamoyl-AMP (TC-AMP) to the N6 group of A37, together with TsaE and TsaB. TsaD likely plays a direct catalytic role in this reaction. In Limosilactobacillus reuteri (strain DSM 20016) (Lactobacillus reuteri), this protein is tRNA N6-adenosine threonylcarbamoyltransferase.